Here is a 420-residue protein sequence, read N- to C-terminus: Xyloglucan O-acetyltransferase 4 (420 aa).

At 1–30 (MTMHEKMKLPSCSCSAFKCGKKDRWLNMER) the chain is on the cytoplasmic side. A helical; Signal-anchor for type II membrane protein membrane pass occupies residues 31–51 (PIPFLLIGLTTILSVFILYTL). At 52-420 (NPLKFVIEHN…LLLAVLRRLD (369 aa)) the chain is on the lumenal side. Intrachain disulfides connect Cys-78–Cys-128, Cys-99–Cys-164, Cys-108–Cys-400, and Cys-323–Cys-396. A glycan (N-linked (GlcNAc...) asparagine) is linked at Asn-96. A GDS motif motif is present at residues 151–153 (GDS). The active-site Nucleophile is the Ser-153. 4 N-linked (GlcNAc...) asparagine glycosylation sites follow: Asn-192, Asn-212, Asn-270, and Asn-324. Residue Asp-395 is the Proton donor of the active site. Positions 395–398 (DCVH) match the DXXH motif motif. The active-site Proton acceptor is His-398.

The protein belongs to the PC-esterase family. TBL subfamily.

Its subcellular location is the golgi apparatus membrane. In terms of biological role, xyloglucan acetyltransferase that catalyzes the acetylation of fucosylated Gal residues on xyloglucan side chains. Predominantly catalyze 6-O-monoacetylation of Gal residues in the Fuc-Gal-Xyl trisaccharide side chains of xyloglucan oligomers. The chain is Xyloglucan O-acetyltransferase 4 from Populus trichocarpa (Western balsam poplar).